We begin with the raw amino-acid sequence, 81 residues long: Pyruvate synthase subunit PorD (81 aa).

4Fe-4S ferredoxin-type domains lie at 25–50 and 51–80; these read FKPV…GCIN and REHE…MERE. [4Fe-4S] cluster-binding residues include C34, C37, C40, C44, C60, C63, C66, and C70.

As to quaternary structure, heterotetramer of one alpha, one beta, one delta and one gamma chain. Requires [4Fe-4S] cluster as cofactor.

This Methanothermobacter thermautotrophicus (strain ATCC 29096 / DSM 1053 / JCM 10044 / NBRC 100330 / Delta H) (Methanobacterium thermoautotrophicum) protein is Pyruvate synthase subunit PorD (porD).